The primary structure comprises 584 residues: 2-isopropylmalate synthase (584 aa).

In terms of domain architecture, Pyruvate carboxyltransferase spans 40-314 (PRWCAVDLRD…DPQIDFSDIE (275 aa)). Residues aspartate 49, histidine 253, histidine 255, and asparagine 289 each coordinate Mg(2+). The regulatory domain stretch occupies residues 456–584 (SRDGSGSTWG…VRDAQEAAQD (129 aa)).

Belongs to the alpha-IPM synthase/homocitrate synthase family. LeuA type 2 subfamily. Homodimer. It depends on Mg(2+) as a cofactor.

It localises to the cytoplasm. It catalyses the reaction 3-methyl-2-oxobutanoate + acetyl-CoA + H2O = (2S)-2-isopropylmalate + CoA + H(+). It functions in the pathway amino-acid biosynthesis; L-leucine biosynthesis; L-leucine from 3-methyl-2-oxobutanoate: step 1/4. Functionally, catalyzes the condensation of the acetyl group of acetyl-CoA with 3-methyl-2-oxobutanoate (2-ketoisovalerate) to form 3-carboxy-3-hydroxy-4-methylpentanoate (2-isopropylmalate). This Kocuria rhizophila (strain ATCC 9341 / DSM 348 / NBRC 103217 / DC2201) protein is 2-isopropylmalate synthase.